Reading from the N-terminus, the 723-residue chain is Malate synthase G (723 aa).

Acetyl-CoA is bound by residues valine 118, arginine 125–tyrosine 126, serine 274, and arginine 311. The active-site Proton acceptor is the arginine 338. Residues arginine 338, glutamate 427, and glycine 452 to aspartate 455 contribute to the glyoxylate site. Residues glutamate 427 and aspartate 455 each contribute to the Mg(2+) site. Proline 536 is a binding site for acetyl-CoA. The residue at position 617 (cysteine 617) is a Cysteine sulfenic acid (-SOH). Aspartate 631 acts as the Proton donor in catalysis. Cysteine 688 carries the post-translational modification Cysteine sulfenic acid (-SOH).

The protein belongs to the malate synthase family. GlcB subfamily. Monomer. It depends on Mg(2+) as a cofactor.

It is found in the cytoplasm. It carries out the reaction glyoxylate + acetyl-CoA + H2O = (S)-malate + CoA + H(+). It functions in the pathway carbohydrate metabolism; glyoxylate cycle; (S)-malate from isocitrate: step 2/2. In terms of biological role, involved in the glycolate utilization. Catalyzes the condensation and subsequent hydrolysis of acetyl-coenzyme A (acetyl-CoA) and glyoxylate to form malate and CoA. In Escherichia coli O6:H1 (strain CFT073 / ATCC 700928 / UPEC), this protein is Malate synthase G.